The primary structure comprises 455 residues: Beta-1,4-mannosyltransferase bre-3 (455 aa).

This sequence belongs to the glycosyltransferase 2 family.

Its subcellular location is the cytoplasm. It functions in the pathway protein modification; protein glycosylation. Functionally, glycosyltransferase with a proposed role in glycosphingolipid biosynthesis. Involved in susceptibility to pore-forming crystal toxins in conjunction with bre-1, bre-2 and bre-4. Involved in resistance to the nematotoxic C.cinerea galectin Cgl2. Has a role in determining brood size. The chain is Beta-1,4-mannosyltransferase bre-3 from Caenorhabditis briggsae.